Reading from the N-terminus, the 1025-residue chain is Error-prone DNA polymerase (1025 aa).

This sequence belongs to the DNA polymerase type-C family. DnaE2 subfamily.

The protein resides in the cytoplasm. It carries out the reaction DNA(n) + a 2'-deoxyribonucleoside 5'-triphosphate = DNA(n+1) + diphosphate. DNA polymerase involved in damage-induced mutagenesis and translesion synthesis (TLS). It is not the major replicative DNA polymerase. The chain is Error-prone DNA polymerase from Alkalilimnicola ehrlichii (strain ATCC BAA-1101 / DSM 17681 / MLHE-1).